Reading from the N-terminus, the 213-residue chain is Ras-related protein Rab-39B (213 aa).

The GTP site is built by serine 17, glycine 20, lysine 21, serine 22, cysteine 23, serine 37, and threonine 40. Position 22 (serine 22) interacts with Mg(2+). Residues glutamine 35–valine 43 form a switch-I region. The Mg(2+) site is built by threonine 40 and aspartate 64. GTP-binding residues include glycine 67, histidine 123, lysine 124, aspartate 126, alanine 154, and arginine 155. Residues glycine 67–valine 83 are switch-II. Serine 201 carries the phosphoserine modification. Residues cysteine 211 and cysteine 213 are each lipidated (S-geranylgeranyl cysteine). Cysteine 213 bears the Cysteine methyl ester mark.

This sequence belongs to the small GTPase superfamily. Rab family. Interacts (GDP-bound) with C9orf72; C9orf72 in complex with SMCR8 acts as a GEF for RAB39B. Interacts (in GTP-bound form) with PICK1 (via PDZ domain); a PICK1 homodimer may allow simultaneous association of RAB39B and GRIA2 to PICK1 which is involved in GRIA2 trafficking. Interacts with isoform c of RASSF1; the interaction is strong. Interacts with isoform a of RASSF1; the interaction is weak. Interacts with the DLG4/PSD-95. Interacts (GTP-bound) with HOPS complex components VPS39 and VPS41. Mg(2+) is required as a cofactor. In terms of tissue distribution, specifically expressed in neuron and neuronal precursors in the brain. Expression is high in all regions of the brain with highest levels observed in the hippocampus.

The protein localises to the cell membrane. The protein resides in the cytoplasmic vesicle membrane. It is found in the golgi apparatus. It localises to the cytoplasmic vesicle. Its subcellular location is the autophagosome membrane. The protein localises to the autolysosome membrane. It catalyses the reaction GTP + H2O = GDP + phosphate + H(+). With respect to regulation, regulated by guanine nucleotide exchange factors (GEFs) including C9orf72-SMCR8 complex, which promote the exchange of bound GDP for free GTP. Regulated by GTPase activating proteins (GAPs) which increase the GTP hydrolysis activity. Inhibited by GDP dissociation inhibitors (GDIs). Its function is as follows. The small GTPases Rab are key regulators of intracellular membrane trafficking, from the formation of transport vesicles to their fusion with membranes. Rabs cycle between an inactive GDP-bound form and an active GTP-bound form that is able to recruit to membranes different sets of downstream effectors directly responsible for vesicle formation, movement, tethering and fusion. RAB39B is involved in autophagy and may function in autophagosome formation. Binds downstream effector PICK1 to ensure selectively GRIA2 exit from the endoplasmic reticulum to the Golgi and to regulate AMPAR composition at the post-synapses and thus synaptic transmission. May regulate the homeostasis of SNCA/alpha-synuclein. This Mus musculus (Mouse) protein is Ras-related protein Rab-39B.